The sequence spans 194 residues: dTTP/UTP pyrophosphatase (194 aa).

Asp69 acts as the Proton acceptor in catalysis.

It belongs to the Maf family. YhdE subfamily. A divalent metal cation is required as a cofactor.

It is found in the cytoplasm. The enzyme catalyses dTTP + H2O = dTMP + diphosphate + H(+). It carries out the reaction UTP + H2O = UMP + diphosphate + H(+). Nucleoside triphosphate pyrophosphatase that hydrolyzes dTTP and UTP. May have a dual role in cell division arrest and in preventing the incorporation of modified nucleotides into cellular nucleic acids. In Moorella thermoacetica (strain ATCC 39073 / JCM 9320), this protein is dTTP/UTP pyrophosphatase.